Reading from the N-terminus, the 339-residue chain is Dihydroorotate dehydrogenase (quinone) (339 aa).

FMN contacts are provided by residues 61 to 65 (AGLDK) and Thr85. Lys65 is a binding site for substrate. Position 110-114 (110-114 (NRMGF)) interacts with substrate. Residues Asn138 and Asn171 each coordinate FMN. Residue Asn171 coordinates substrate. Ser174 functions as the Nucleophile in the catalytic mechanism. Asn176 contacts substrate. 2 residues coordinate FMN: Lys216 and Thr244. Residue 245-246 (NT) coordinates substrate. Residues Gly267, Gly296, and 317-318 (YS) each bind FMN.

It belongs to the dihydroorotate dehydrogenase family. Type 2 subfamily. In terms of assembly, monomer. Requires FMN as cofactor.

It is found in the cell membrane. It carries out the reaction (S)-dihydroorotate + a quinone = orotate + a quinol. It participates in pyrimidine metabolism; UMP biosynthesis via de novo pathway; orotate from (S)-dihydroorotate (quinone route): step 1/1. Functionally, catalyzes the conversion of dihydroorotate to orotate with quinone as electron acceptor. In Saccharophagus degradans (strain 2-40 / ATCC 43961 / DSM 17024), this protein is Dihydroorotate dehydrogenase (quinone).